A 387-amino-acid polypeptide reads, in one-letter code: 3-ketoacyl-CoA thiolase (387 aa).

C91 (acyl-thioester intermediate) is an active-site residue. Residues H343 and C373 each act as proton acceptor in the active site.

It belongs to the thiolase-like superfamily. Thiolase family. Heterotetramer of two alpha chains (FadB) and two beta chains (FadA).

It localises to the cytoplasm. The catalysed reaction is an acyl-CoA + acetyl-CoA = a 3-oxoacyl-CoA + CoA. It functions in the pathway lipid metabolism; fatty acid beta-oxidation. Functionally, catalyzes the final step of fatty acid oxidation in which acetyl-CoA is released and the CoA ester of a fatty acid two carbons shorter is formed. The sequence is that of 3-ketoacyl-CoA thiolase from Shewanella baltica (strain OS185).